The chain runs to 981 residues: Anoctamin-3 (981 aa).

Residues 1 to 28 are compositionally biased toward polar residues; it reads MVHHSGSIQSFKQQKGMNISKSEITTEA. Disordered regions lie at residues 1–32 and 67–87; these read MVHH…SLKP and PTSV…EESR. Residues 1–403 lie on the Cytoplasmic side of the membrane; sequence MVHHSGSIQS…LYFAWLGWYT (403 aa). Over residues 76–87 the composition is skewed to basic and acidic residues; that stretch reads DKPEHVTSEESR. A helical transmembrane segment spans residues 404-424; it reads GMLIPAAVVGLCVFFYGLVTM. N-linked (GlcNAc...) asparagine glycosylation is found at asparagine 425, asparagine 448, and asparagine 455. The Extracellular portion of the chain corresponds to 425–469; it reads NESQVSQEICKATEVFMCPLCDKNCSLQRLNDSCIYAKVTYLFDN. Residues 470–490 traverse the membrane as a helical segment; sequence GGTVFFAIFMAIWATVFLEFW. The Cytoplasmic segment spans residues 491–550; the sequence is KRRRSILTYTWDLIEWEEEEETLRPQFEAKYYRMEVINPITGKPEPHQPSSDKVTRLLVS. Residues 551-571 form a helical membrane-spanning segment; that stretch reads VSGIFFMISLVITAVFAVVVY. The Extracellular segment spans residues 572–592; sequence RLVVMEQFASFKWNFVKQHWQ. The chain crosses the membrane as a helical span at residues 593-613; that stretch reads FATSGAAVCINFIIIMLLNLA. The Cytoplasmic segment spans residues 614-640; the sequence is YEKIAYLLTNLEYPRTESEWENSFALK. Residues 641–661 form a helical membrane-spanning segment; that stretch reads MFLFQFVNLNSSIFYIAFFLG. Residues 662 to 761 lie on the Extracellular side of the membrane; that stretch reads RFVGHPGKYN…MDEYLEMVLQ (100 aa). Residues 762 to 782 form a helical membrane-spanning segment; it reads FGFTTIFVAAFPLAPLLALLN. The Cytoplasmic segment spans residues 783–810; it reads NIIEIRLDAYKFVTQWRRPLPARATDIG. A helical membrane pass occupies residues 811–831; sequence IWLGILEGIGILAVITNAFVI. The Extracellular portion of the chain corresponds to 832–914; it reads AITSDYIPRF…QYWHILAARL (83 aa). Residue asparagine 866 is glycosylated (N-linked (GlcNAc...) asparagine). The helical transmembrane segment at 915-935 threads the bilayer; sequence AFIIVFEHLVFGIKSFIAYLI. The Cytoplasmic portion of the chain corresponds to 936–981; that stretch reads PDIPKGLRERIRREKYLVQEMMYEAELEHLQQQRRKSGQPIHHEWP.

It belongs to the anoctamin family. As to quaternary structure, interacts with KCNT1/Slack. Predominantly expressed in neuronal tissues. Expressed in brain.

It localises to the cell membrane. The enzyme catalyses a 1,2-diacyl-sn-glycero-3-phosphocholine(in) = a 1,2-diacyl-sn-glycero-3-phosphocholine(out). The catalysed reaction is a beta-D-galactosyl-(1&lt;-&gt;1')-N-acylsphing-4-enine(out) = a beta-D-galactosyl-(1&lt;-&gt;1')-N-acylsphing-4-enine(in). Has calcium-dependent phospholipid scramblase activity; scrambles phosphatidylcholine and galactosylceramide. Does not exhibit calcium-activated chloride channel (CaCC) activity. Seems to act as potassium channel regulator and may inhibit pain signaling; can facilitate KCNT1/Slack channel activity by promoting its full single-channel conductance at very low sodium concentrations and by increasing its sodium sensitivity. This chain is Anoctamin-3, found in Mus musculus (Mouse).